Here is a 261-residue protein sequence, read N- to C-terminus: uncharacterized protein (261 aa).

The span at 1–12 shows a compositional bias: polar residues; the sequence is MSRTSSQNQEII. The interval 1–139 is disordered; sequence MSRTSSQNQE…KELDTINKKT (139 aa). Residues 23-55 show a composition bias toward low complexity; that stretch reads SSKPSKSSKPSKSSKPSKSSKTSKSSRSSGSKS. Over residues 65-74 the composition is skewed to basic and acidic residues; that stretch reads SRKDKYKEEY. Positions 79-108 are enriched in acidic residues; the sequence is YPDEQEYEQEYEQEYEQEYQDNGEQTEEFV. Over residues 122-139 the composition is skewed to basic and acidic residues; that stretch reads DERQTQSNKELDTINKKT. 2 coiled-coil regions span residues 151–181 and 218–243; these read MDHD…IIKL and EDII…KKIE.

This is an uncharacterized protein from Acanthamoeba polyphaga (Amoeba).